Consider the following 189-residue polypeptide: Adenylate kinase (189 aa).

10 to 15 (AAGKGT) serves as a coordination point for ATP. Positions 30-59 (STGDMLRAARASGSELGQRVAKIMDEGGLV) are NMP. AMP contacts are provided by residues T31, R36, 57 to 59 (GLV), 85 to 88 (GFPR), and Q92. Positions 126-136 (KRFEEQGRADD) are LID. R127 lines the ATP pocket. 2 residues coordinate AMP: R133 and R144. G172 lines the ATP pocket.

This sequence belongs to the adenylate kinase family. As to quaternary structure, monomer.

It localises to the cytoplasm. It catalyses the reaction AMP + ATP = 2 ADP. The protein operates within purine metabolism; AMP biosynthesis via salvage pathway; AMP from ADP: step 1/1. Catalyzes the reversible transfer of the terminal phosphate group between ATP and AMP. Plays an important role in cellular energy homeostasis and in adenine nucleotide metabolism. The sequence is that of Adenylate kinase from Hyphomonas neptunium (strain ATCC 15444).